The primary structure comprises 436 residues: ATP-dependent protease ATPase subunit HslU (436 aa).

Residues Val18, Gly60–Glu65, Asp249, Glu314, and Arg386 each bind ATP.

It belongs to the ClpX chaperone family. HslU subfamily. As to quaternary structure, a double ring-shaped homohexamer of HslV is capped on each side by a ring-shaped HslU homohexamer. The assembly of the HslU/HslV complex is dependent on binding of ATP.

It localises to the cytoplasm. Functionally, ATPase subunit of a proteasome-like degradation complex; this subunit has chaperone activity. The binding of ATP and its subsequent hydrolysis by HslU are essential for unfolding of protein substrates subsequently hydrolyzed by HslV. HslU recognizes the N-terminal part of its protein substrates and unfolds these before they are guided to HslV for hydrolysis. This chain is ATP-dependent protease ATPase subunit HslU, found in Rhizobium rhizogenes (strain K84 / ATCC BAA-868) (Agrobacterium radiobacter).